Consider the following 637-residue polypeptide: tRNA uridine 5-carboxymethylaminomethyl modification enzyme MnmG (637 aa).

Residues 15–20, V127, and S182 contribute to the FAD site; that span reads GAGHAG. 274–288 lines the NAD(+) pocket; that stretch reads GPRYCPSIEDKVVRF. Residue Q371 coordinates FAD.

Belongs to the MnmG family. Homodimer. Heterotetramer of two MnmE and two MnmG subunits. The cofactor is FAD.

It is found in the cytoplasm. In terms of biological role, NAD-binding protein involved in the addition of a carboxymethylaminomethyl (cmnm) group at the wobble position (U34) of certain tRNAs, forming tRNA-cmnm(5)s(2)U34. This Heliobacterium modesticaldum (strain ATCC 51547 / Ice1) protein is tRNA uridine 5-carboxymethylaminomethyl modification enzyme MnmG.